A 1526-amino-acid polypeptide reads, in one-letter code: uncharacterized protein (1526 aa).

16 WD repeats span residues 334–376 (CTKE…EHIS), 862–901 (KILG…ELLT), 904–945 (GHNS…KTFK), 946–985 (GHTS…CLYI), 988–1027 (GHTG…CFYI), 1030–1069 (GHTS…CLYT), 1072–1111 (GHTS…CLYT), 1114–1153 (GYTS…CLYT), 1156–1195 (GHTN…CLYI), 1198–1237 (GHTS…CLCT), 1240–1279 (GHTS…CLHT), 1282–1321 (GHTN…CLHT), 1324–1363 (GHTS…CLYT), 1366–1405 (GHTN…CLYT), 1408–1447 (GHNN…CLYT), and 1450–1491 (GHIN…KTLK). The Pentapeptide repeat domain occupies 823 to 862 (MVLEGRDLSHTVIIGADFTNTSLRCVNFTEANLAYSVFTK).

This is an uncharacterized protein from Nostoc sp. (strain PCC 7120 / SAG 25.82 / UTEX 2576).